The primary structure comprises 345 residues: Histidinol-phosphate aminotransferase (345 aa).

Lys-205 is subject to N6-(pyridoxal phosphate)lysine.

Belongs to the class-II pyridoxal-phosphate-dependent aminotransferase family. Histidinol-phosphate aminotransferase subfamily. Homodimer. Pyridoxal 5'-phosphate serves as cofactor.

It carries out the reaction L-histidinol phosphate + 2-oxoglutarate = 3-(imidazol-4-yl)-2-oxopropyl phosphate + L-glutamate. Its pathway is amino-acid biosynthesis; L-histidine biosynthesis; L-histidine from 5-phospho-alpha-D-ribose 1-diphosphate: step 7/9. The sequence is that of Histidinol-phosphate aminotransferase from Parabacteroides distasonis (strain ATCC 8503 / DSM 20701 / CIP 104284 / JCM 5825 / NCTC 11152).